We begin with the raw amino-acid sequence, 282 residues long: E3 ubiquitin-protein ligase SIAH1 (282 aa).

The span at 1 to 17 (MSRQTATALPTGTSKCP) shows a compositional bias: polar residues. The segment at 1–22 (MSRQTATALPTGTSKCPPSQRV) is disordered. S19 is subject to Phosphoserine; by ATM and ATR. The segment at 41–76 (CPVCFDYVLPPILQCQSGHLVCSNCRPKLTCCPTCR) adopts an RING-type zinc-finger fold. An SBD region spans residues 90 to 282 (VANSVLFPCK…LGINVTISMC (193 aa)). An SIAH-type zinc finger spans residues 93–153 (SVLFPCKYAS…VMPHLMHQHK (61 aa)). Zn(2+)-binding residues include C98, C105, H117, C121, C128, C135, H147, and H152.

This sequence belongs to the SINA (Seven in absentia) family. Homodimer. Interacts with group 1 glutamate receptors GRM1 and GRM5. Interacts with DAB1, which may inhibit its activity. Interacts with UBE2E2. Interacts with PEG3. Interacts with GAPDH; leading to stabilize SIAH1. Component of some large E3 complex composed of UBE2D1, SIAH1, CACYBP/SIP, SKP1, APC and TBL1X. Interacts with UBE2I. Interacts with alpha-tubulin. Interacts with PEG10, which may inhibit its activity. Interacts with KHDRBS3. Interacts with SNCAIP. Interacts with HIPK2; the interaction is promoted by DAZAP2 and results in SIAH1-mediated ubiquitination and subsequent proteasomal degradation of HIPK2. Interacts with DAZAP2; the interaction is decreased following phosphorylation of DAZAP2 by HIPK2. Interacts with Bassoon/BSN and Piccolo/PLCO; these interactions negatively regulate SIAH1 E3 ligase activity. Interacts with DCC. Interacts with AXIN1; catalyzes AXIN1 ubiquitination and subsequent proteasome-mediated ubiquitin-dependent degradation. In terms of processing, phosphorylated on Ser-19 by ATM and ATR. This phosphorylation disrupts SIAH1 interaction with HIPK2, and subsequent proteasomal degradation of HIPK2. In terms of tissue distribution, widely expressed at a low level. Down-regulated in advanced hepatocellular carcinomas.

It is found in the cytoplasm. It localises to the nucleus. It carries out the reaction S-ubiquitinyl-[E2 ubiquitin-conjugating enzyme]-L-cysteine + [acceptor protein]-L-lysine = [E2 ubiquitin-conjugating enzyme]-L-cysteine + N(6)-ubiquitinyl-[acceptor protein]-L-lysine.. It functions in the pathway protein modification; protein ubiquitination. With respect to regulation, inhibited by interaction with SNCAIP (isoform 2, but not isoform 1). May be inhibited by interaction with PEG10. E3 ubiquitin-protein ligase that mediates ubiquitination and subsequent proteasomal degradation of target proteins. E3 ubiquitin ligases accept ubiquitin from an E2 ubiquitin-conjugating enzyme in the form of a thioester and then directly transfers the ubiquitin to targeted substrates. Mediates E3 ubiquitin ligase activity either through direct binding to substrates or by functioning as the essential RING domain subunit of larger E3 complexes. Triggers the ubiquitin-mediated degradation of many substrates, including proteins involved in transcription regulation (ELL2, MYB, POU2AF1, PML and RBBP8), a cell surface receptor (DCC), the cell-surface receptor-type tyrosine kinase FLT3, the cytoplasmic signal transduction molecules (KLF10/TIEG1 and NUMB), an antiapoptotic protein (BAG1), a microtubule motor protein (KIF22), a protein involved in synaptic vesicle function in neurons (SYP), a structural protein (CTNNB1) and SNCAIP. Confers constitutive instability to HIPK2 through proteasomal degradation. It is thereby involved in many cellular processes such as apoptosis, tumor suppression, cell cycle, axon guidance, transcription regulation, spermatogenesis and TNF-alpha signaling. Has some overlapping function with SIAH2. Induces apoptosis in cooperation with PEG3. Upon nitric oxid (NO) generation that follows apoptotic stimulation, interacts with S-nitrosylated GAPDH, mediating the translocation of GAPDH to the nucleus. GAPDH acts as a stabilizer of SIAH1, facilitating the degradation of nuclear proteins. Mediates ubiquitination and degradation of EGLN2 and EGLN3 in response to the unfolded protein response (UPR), leading to their degradation and subsequent stabilization of ATF4. Also part of the Wnt signaling pathway in which it mediates the Wnt-induced ubiquitin-mediated proteasomal degradation of AXIN1. In Homo sapiens (Human), this protein is E3 ubiquitin-protein ligase SIAH1 (SIAH1).